The chain runs to 543 residues: Chaperonin GroEL (543 aa).

Residues 29-32, 86-90, glycine 413, 476-478, and aspartate 492 contribute to the ATP site; these read TLGP, DGTTT, and NAA.

It belongs to the chaperonin (HSP60) family. In terms of assembly, forms a cylinder of 14 subunits composed of two heptameric rings stacked back-to-back. Interacts with the co-chaperonin GroES.

It localises to the cytoplasm. The enzyme catalyses ATP + H2O + a folded polypeptide = ADP + phosphate + an unfolded polypeptide.. Together with its co-chaperonin GroES, plays an essential role in assisting protein folding. The GroEL-GroES system forms a nano-cage that allows encapsulation of the non-native substrate proteins and provides a physical environment optimized to promote and accelerate protein folding. This chain is Chaperonin GroEL, found in Streptococcus pyogenes serotype M18 (strain MGAS8232).